The primary structure comprises 101 residues: Protein Tat (101 aa).

Residues 1-20 (MEPVDPSLEPWKHPGSQPKT) are disordered. Residues 1–24 (MEPVDPSLEPWKHPGSQPKTACTN) are interaction with human CREBBP. The tract at residues 1-48 (MEPVDPSLEPWKHPGSQPKTACTNCYCKKCCLHCQVCFTTKGLGISYG) is transactivation. Zn(2+) is bound by residues Cys-22, Cys-25, and Cys-27. The cysteine-rich stretch occupies residues 22–37 (CTNCYCKKCCLHCQVC). An N6-acetyllysine; by host PCAF modification is found at Lys-28. Residues Cys-30, His-33, Cys-34, and Cys-37 each contribute to the Zn(2+) site. The tract at residues 38-48 (FTTKGLGISYG) is core. Residues 45–101 (ISYGRKKRRQRRRPPQDSQTHQVSLPKQPSSQQRGDPTGPKESKKKVERETETDPDN) are disordered. The span at 48–57 (GRKKRRQRRR) shows a compositional bias: basic residues. The Nuclear localization signal, RNA-binding (TAR), and protein transduction signature appears at 49 to 57 (RKKRRQRRR). Residues 49–86 (RKKRRQRRRPPQDSQTHQVSLPKQPSSQQRGDPTGPKE) form an interaction with the host capping enzyme RNGTT region. 2 positions are modified to N6-acetyllysine; by host EP300 and GCN5L2: Lys-50 and Lys-51. Asymmetric dimethylarginine; by host PRMT6 occurs at positions 52 and 53. Over residues 61–79 (DSQTHQVSLPKQPSSQQRG) the composition is skewed to polar residues. A Glycyl lysine isopeptide (Lys-Gly) (interchain with G-Cter in ubiquitin) cross-link involves residue Lys-71. The Cell attachment site signature appears at 78–80 (RGD). Positions 83-101 (GPKESKKKVERETETDPDN) are enriched in basic and acidic residues.

It belongs to the lentiviruses Tat family. Interacts with host CCNT1. Associates with the P-TEFb complex composed at least of Tat, P-TEFb (CDK9 and CCNT1), TAR RNA, RNA Pol II. Recruits the HATs CREBBP, TAF1/TFIID, EP300, PCAF and GCN5L2. Interacts with host KAT5/Tip60; this interaction targets the latter to degradation. Interacts with the host deacetylase SIRT1. Interacts with host capping enzyme RNGTT; this interaction stimulates RNGTT. Binds to host KDR, and to the host integrins ITGAV/ITGB3 and ITGA5/ITGB1. Interacts with host KPNB1/importin beta-1 without previous binding to KPNA1/importin alpha-1. Interacts with EIF2AK2. Interacts with host nucleosome assembly protein NAP1L1; this interaction may be required for the transport of Tat within the nucleus, since the two proteins interact at the nuclear rim. Interacts with host C1QBP/SF2P32; this interaction involves lysine-acetylated Tat. Interacts with the host chemokine receptors CCR2, CCR3 and CXCR4. Interacts with host DPP4/CD26; this interaction may trigger an anti-proliferative effect. Interacts with host LDLR. Interacts with the host extracellular matrix metalloproteinase MMP1. Interacts with host PRMT6; this interaction mediates Tat's methylation. Interacts with, and is ubiquitinated by MDM2/Hdm2. Interacts with host PSMC3 and HTATIP2. Interacts with STAB1; this interaction may overcome SATB1-mediated repression of IL2 and IL2RA (interleukin) in T cells by binding to the same domain than HDAC1. Interacts (when acetylated) with human CDK13, thereby increasing HIV-1 mRNA splicing and promoting the production of the doubly spliced HIV-1 protein Nef. Interacts with host TBP; this interaction modulates the activity of transcriptional pre-initiation complex. Interacts with host RELA. Interacts with host PLSCR1; this interaction negatively regulates Tat transactivation activity by altering its subcellular distribution. Post-translationally, asymmetrical arginine methylation by host PRMT6 seems to diminish the transactivation capacity of Tat and affects the interaction with host CCNT1. Acetylation by EP300, CREBBP, GCN5L2/GCN5 and PCAF regulates the transactivation activity of Tat. EP300-mediated acetylation of Lys-50 promotes dissociation of Tat from the TAR RNA through the competitive binding to PCAF's bromodomain. In addition, the non-acetylated Tat's N-terminus can also interact with PCAF. PCAF-mediated acetylation of Lys-28 enhances Tat's binding to CCNT1. Lys-50 is deacetylated by SIRT1. In terms of processing, polyubiquitination by host MDM2 does not target Tat to degradation, but activates its transactivation function and fosters interaction with CCNT1 and TAR RNA. Post-translationally, phosphorylated by EIF2AK2 on serine and threonine residues adjacent to the basic region important for TAR RNA binding and function. Phosphorylation of Tat by EIF2AK2 is dependent on the prior activation of EIF2AK2 by dsRNA.

Its subcellular location is the host nucleus. It is found in the host nucleolus. The protein localises to the host cytoplasm. The protein resides in the secreted. In terms of biological role, transcriptional activator that increases RNA Pol II processivity, thereby increasing the level of full-length viral transcripts. Recognizes a hairpin structure at the 5'-LTR of the nascent viral mRNAs referred to as the transactivation responsive RNA element (TAR) and recruits the cyclin T1-CDK9 complex (P-TEFb complex) that will in turn hyperphosphorylate the RNA polymerase II to allow efficient elongation. The CDK9 component of P-TEFb and other Tat-activated kinases hyperphosphorylate the C-terminus of RNA Pol II that becomes stabilized and much more processive. Other factors such as HTATSF1/Tat-SF1, SUPT5H/SPT5, and HTATIP2 are also important for Tat's function. Besides its effect on RNA Pol II processivity, Tat induces chromatin remodeling of proviral genes by recruiting the histone acetyltransferases (HATs) CREBBP, EP300 and PCAF to the chromatin. This also contributes to the increase in proviral transcription rate, especially when the provirus integrates in transcriptionally silent region of the host genome. To ensure maximal activation of the LTR, Tat mediates nuclear translocation of NF-kappa-B by interacting with host RELA. Through its interaction with host TBP, Tat may also modulate transcription initiation. Tat can reactivate a latently infected cell by penetrating in it and transactivating its LTR promoter. In the cytoplasm, Tat is thought to act as a translational activator of HIV-1 mRNAs. Functionally, extracellular circulating Tat can be endocytosed by surrounding uninfected cells via the binding to several surface receptors such as CD26, CXCR4, heparan sulfate proteoglycans (HSPG) or LDLR. Neurons are rarely infected, but they internalize Tat via their LDLR. Through its interaction with nuclear HATs, Tat is potentially able to control the acetylation-dependent cellular gene expression. Modulates the expression of many cellular genes involved in cell survival, proliferation or in coding for cytokines or cytokine receptors. Tat plays a role in T-cell and neurons apoptosis. Tat induced neurotoxicity and apoptosis probably contribute to neuroAIDS. Circulating Tat also acts as a chemokine-like and/or growth factor-like molecule that binds to specific receptors on the surface of the cells, affecting many cellular pathways. In the vascular system, Tat binds to ITGAV/ITGB3 and ITGA5/ITGB1 integrins dimers at the surface of endothelial cells and competes with bFGF for heparin-binding sites, leading to an excess of soluble bFGF. The protein is Protein Tat of Homo sapiens (Human).